The following is an 87-amino-acid chain: Small ribosomal subunit protein bS20 (87 aa).

The interval 1 to 22 is disordered; it reads MANSAQARKRARQSVKQRAHNA. Over residues 7–19 the composition is skewed to basic residues; the sequence is ARKRARQSVKQRA.

The protein belongs to the bacterial ribosomal protein bS20 family.

In terms of biological role, binds directly to 16S ribosomal RNA. This is Small ribosomal subunit protein bS20 from Neisseria gonorrhoeae (strain ATCC 700825 / FA 1090).